The chain runs to 195 residues: Thioredoxin reductase-like selenoprotein T (195 aa).

The N-terminal stretch at 1-19 (MRLLLLLLVAASAVVRSEA) is a signal peptide. A cross-link (cysteinyl-selenocysteine (Cys-Sec)) is located at residues 46-49 (CVSU). Selenocysteine 49 is a non-standard amino acid (selenocysteine). A helical membrane pass occupies residues 85–103 (IASFLSVFKLVLIGLIIVG).

The protein belongs to the SelWTH family. Selenoprotein T subfamily. Post-translationally, may contain a selenide-sulfide bond between Cys-46 and Sec-49. This bond is speculated to serve as redox-active pair. In terms of tissue distribution, ubiquitous. Highly expressed in the endocrine pancreas. Expressed at low levels in the adult brain.

It is found in the endoplasmic reticulum membrane. The enzyme catalyses [thioredoxin]-dithiol + NADP(+) = [thioredoxin]-disulfide + NADPH + H(+). Functionally, selenoprotein with thioredoxin reductase-like oxidoreductase activity. Protects dopaminergic neurons against oxidative stress and cell death. Involved in ADCYAP1/PACAP-induced calcium mobilization and neuroendocrine secretion. Plays a role in fibroblast anchorage and redox regulation. In gastric smooth muscle, modulates the contraction processes through the regulation of calcium release and MYLK activation. In pancreatic islets, involved in the control of glucose homeostasis, contributes to prolonged ADCYAP1/PACAP-induced insulin secretion. The polypeptide is Thioredoxin reductase-like selenoprotein T (Mus musculus (Mouse)).